The chain runs to 343 residues: Cytoplasmic tRNA 2-thiolation protein 1 (343 aa).

It belongs to the TtcA family. CTU1/NCS6/ATPBD3 subfamily.

The protein resides in the cytoplasm. It participates in tRNA modification; 5-methoxycarbonylmethyl-2-thiouridine-tRNA biosynthesis. Functionally, plays a central role in 2-thiolation of mcm(5)S(2)U at tRNA wobble positions of tRNA(Lys), tRNA(Glu) and tRNA(Gln). Directly binds tRNAs and probably acts by catalyzing adenylation of tRNAs, an intermediate required for 2-thiolation. It is unclear whether it acts as a sulfurtransferase that transfers sulfur from thiocarboxylated URM1 onto the uridine of tRNAs at wobble position. The chain is Cytoplasmic tRNA 2-thiolation protein 1 from Drosophila virilis (Fruit fly).